The sequence spans 75 residues: Sperm-specific protein PL-I (75 aa).

Positions 2–74 (GSSGMMSMVA…GSAGWVLVPK (73 aa)) constitute an H15 domain.

It belongs to the histone H1/H5 family. As to expression, sperm.

It localises to the nucleus. Its subcellular location is the chromosome. Its function is as follows. Linker histones are implicated in chromatin remodeling and/or transcriptional regulation during spermiogenesis, the process of spermatid maturation into spermatozoa. This is Sperm-specific protein PL-I from Spisula solidissima (Atlantic surf-clam).